The following is a 328-amino-acid chain: Malate dehydrogenase (328 aa).

12–18 (GAAGQIG) contacts NAD(+). Residues Arg-95 and Arg-101 each coordinate substrate. NAD(+) is bound by residues Asn-108, Gln-115, and 132–134 (VGN). Positions 134 and 165 each coordinate substrate. Catalysis depends on His-190, which acts as the Proton acceptor.

This sequence belongs to the LDH/MDH superfamily. MDH type 2 family.

The enzyme catalyses (S)-malate + NAD(+) = oxaloacetate + NADH + H(+). Functionally, catalyzes the reversible oxidation of malate to oxaloacetate. This chain is Malate dehydrogenase, found in Leptothrix cholodnii (strain ATCC 51168 / LMG 8142 / SP-6) (Leptothrix discophora (strain SP-6)).